The primary structure comprises 254 residues: Proteasome subunit alpha type-4 (254 aa).

Thr60 is subject to Phosphothreonine. Residues 235–254 form a disordered region; the sequence is QIEQEKQEQQEQDKKKKSNH. Positions 237–248 are enriched in basic and acidic residues; sequence EQEKQEQQEQDK.

Belongs to the peptidase T1A family. The 26S proteasome consists of a 20S proteasome core and two 19S regulatory subunits. The 20S proteasome core is composed of 28 subunits that are arranged in four stacked rings, resulting in a barrel-shaped structure. The two end rings are each formed by seven alpha subunits, and the two central rings are each formed by seven beta subunits. The catalytic chamber with the active sites is on the inside of the barrel. Interacts with CIC1.

It is found in the cytoplasm. The protein localises to the nucleus. In terms of biological role, the proteasome degrades poly-ubiquitinated proteins in the cytoplasm and in the nucleus. It is essential for the regulated turnover of proteins and for the removal of misfolded proteins. The proteasome is a multicatalytic proteinase complex that is characterized by its ability to cleave peptides with Arg, Phe, Tyr, Leu, and Glu adjacent to the leaving group at neutral or slightly basic pH. It has an ATP-dependent proteolytic activity. This Saccharomyces cerevisiae (strain ATCC 204508 / S288c) (Baker's yeast) protein is Proteasome subunit alpha type-4 (PRE6).